The following is a 637-amino-acid chain: DNA mismatch repair protein MutL (637 aa).

Disordered stretches follow at residues 352–384 and 405–430; these read DDFT…NVLF and ASVE…AMEQ.

This sequence belongs to the DNA mismatch repair MutL/HexB family.

In terms of biological role, this protein is involved in the repair of mismatches in DNA. It is required for dam-dependent methyl-directed DNA mismatch repair. May act as a 'molecular matchmaker', a protein that promotes the formation of a stable complex between two or more DNA-binding proteins in an ATP-dependent manner without itself being part of a final effector complex. In Halalkalibacterium halodurans (strain ATCC BAA-125 / DSM 18197 / FERM 7344 / JCM 9153 / C-125) (Bacillus halodurans), this protein is DNA mismatch repair protein MutL.